Here is a 255-residue protein sequence, read N- to C-terminus: uncharacterized protein (255 aa).

A signal peptide spans 1–23 (MKRLNKLVLGIIFLFLVISITAG). A lipid anchor (N-palmitoyl cysteine) is attached at Cys-24. Cys-24 carries S-diacylglycerol cysteine lipidation.

This sequence belongs to the staphylococcal tandem lipoprotein family.

The protein localises to the cell membrane. This is an uncharacterized protein from Staphylococcus aureus (strain USA300).